Consider the following 638-residue polypeptide: ATP-dependent zinc metalloprotease FtsH (638 aa).

The Cytoplasmic portion of the chain corresponds to 1 to 11 (MSQKGKNKKWR). Residues 12 to 32 (SAGLYALLAIVLISLATTFLG) traverse the membrane as a helical segment. Over 33–114 (NRPPERLEIS…LAVRPVQEEG (82 aa)) the chain is Lumenal. The helical transmembrane segment at 115–135 (LLGRILSTFFLPVLLLLGLFF) threads the bilayer. The Cytoplasmic segment spans residues 136-638 (LLRRAQNGPG…TLPMAVNAGA (503 aa)). 209–216 (GPPGTGKT) contacts ATP. Residue His431 participates in Zn(2+) binding. Glu432 is an active-site residue. Zn(2+) is bound by residues His435 and Asp510.

In the central section; belongs to the AAA ATPase family. This sequence in the C-terminal section; belongs to the peptidase M41 family. In terms of assembly, homohexamer. Zn(2+) is required as a cofactor.

The protein resides in the cellular thylakoid membrane. Functionally, acts as a processive, ATP-dependent zinc metallopeptidase for both cytoplasmic and membrane proteins. Plays a role in the quality control of integral membrane proteins. In Synechococcus sp. (strain JA-2-3B'a(2-13)) (Cyanobacteria bacterium Yellowstone B-Prime), this protein is ATP-dependent zinc metalloprotease FtsH.